The chain runs to 172 residues: Shikimate kinase (172 aa).

Position 14–19 (14–19 (GAGKST)) interacts with ATP. S18 contributes to the Mg(2+) binding site. Substrate contacts are provided by D36, R60, and G82. Position 120 (R120) interacts with ATP. A substrate-binding site is contributed by R139. Position 156 (Q156) interacts with ATP.

This sequence belongs to the shikimate kinase family. Monomer. Mg(2+) is required as a cofactor.

The protein localises to the cytoplasm. The catalysed reaction is shikimate + ATP = 3-phosphoshikimate + ADP + H(+). The protein operates within metabolic intermediate biosynthesis; chorismate biosynthesis; chorismate from D-erythrose 4-phosphate and phosphoenolpyruvate: step 5/7. Its function is as follows. Catalyzes the specific phosphorylation of the 3-hydroxyl group of shikimic acid using ATP as a cosubstrate. The protein is Shikimate kinase of Vibrio campbellii (strain ATCC BAA-1116).